Here is a 281-residue protein sequence, read N- to C-terminus: 4-diphosphocytidyl-2-C-methyl-D-erythritol kinase (281 aa).

Residue Lys11 is part of the active site. Position 92-102 (92-102) interacts with ATP; the sequence is LVSAGLAGGSA. The active site involves Asp132.

This sequence belongs to the GHMP kinase family. IspE subfamily.

The catalysed reaction is 4-CDP-2-C-methyl-D-erythritol + ATP = 4-CDP-2-C-methyl-D-erythritol 2-phosphate + ADP + H(+). It functions in the pathway isoprenoid biosynthesis; isopentenyl diphosphate biosynthesis via DXP pathway; isopentenyl diphosphate from 1-deoxy-D-xylulose 5-phosphate: step 3/6. In terms of biological role, catalyzes the phosphorylation of the position 2 hydroxy group of 4-diphosphocytidyl-2C-methyl-D-erythritol. This is 4-diphosphocytidyl-2-C-methyl-D-erythritol kinase from Ehrlichia ruminantium (strain Gardel).